Here is a 298-residue protein sequence, read N- to C-terminus: Cyanophycinase (298 aa).

Active-site charge relay system residues include serine 155, glutamate 173, and histidine 197.

It belongs to the peptidase S51 family.

It catalyses the reaction [L-4-(L-arginin-2-N-yl)aspartate](n) + H2O = [L-4-(L-arginin-2-N-yl)aspartate](n-1) + L-4-(L-arginin-2-N-yl)aspartate. In terms of biological role, exopeptidase that catalyzes the hydrolytic cleavage of multi-L-arginyl-poly-L-aspartic acid (cyanophycin; a water-insoluble reserve polymer) into aspartate-arginine dipeptides. The polypeptide is Cyanophycinase (cphB) (Nostoc sp. (strain PCC 7120 / SAG 25.82 / UTEX 2576)).